The primary structure comprises 496 residues: Maintenance of mitochondrial morphology protein 1 (496 aa).

Residues 1–22 (MSSQLNDPTPIPAQSSLSFTQG) lie on the Lumenal side of the membrane. A helical transmembrane segment spans residues 23 to 43 (FLLGQLSVVLLIAAFIKFFIF). The Cytoplasmic segment spans residues 44–496 (GEAPPPPSRG…SLPGGGVTTT (453 aa)). Disordered regions lie at residues 50-96 (PSRG…VPSS), 276-331 (PLDT…KSNV), 395-433 (GRTG…SREP), and 449-496 (DLAS…VTTT). Positions 54–64 (LSHRSATHRRS) are enriched in basic residues. The span at 65–74 (NSIYSSTQHD) shows a compositional bias: polar residues. Positions 75–84 (GNTRTLREKP) are enriched in basic and acidic residues. Polar residues predominate over residues 85–96 (SNSNVLRPVPSS). Residues 131 to 388 (QPESLDWFNV…EPRVQVVGLP (258 aa)) enclose the SMP-LTD domain. The span at 276-287 (PLDTPSHSPSPP) shows a compositional bias: pro residues. Residues 407-418 (TGSNAPRSSTAA) are compositionally biased toward polar residues. Basic and acidic residues-rich tracts occupy residues 424–433 (AHHEDSSREP) and 462–474 (GDLR…REES).

It belongs to the MMM1 family. In terms of assembly, homodimer. Component of the ER-mitochondria encounter structure (ERMES) or MDM complex, composed of mmm1, mdm10, mdm12 and mdm34. A mmm1 homodimer associates with one molecule of mdm12 on each side in a pairwise head-to-tail manner, and the SMP-LTD domains of mmm1 and mdm12 generate a continuous hydrophobic tunnel for phospholipid trafficking.

It localises to the endoplasmic reticulum membrane. In terms of biological role, component of the ERMES/MDM complex, which serves as a molecular tether to connect the endoplasmic reticulum (ER) and mitochondria. Components of this complex are involved in the control of mitochondrial shape and protein biogenesis, and function in nonvesicular lipid trafficking between the ER and mitochondria. The mdm12-mmm1 subcomplex functions in the major beta-barrel assembly pathway that is responsible for biogenesis of all outer membrane beta-barrel proteins, and acts in a late step after the SAM complex. The mdm10-mdm12-mmm1 subcomplex further acts in the TOM40-specific pathway after the action of the mdm12-mmm1 complex. Essential for establishing and maintaining the structure of mitochondria and maintenance of mtDNA nucleoids. In Neosartorya fischeri (strain ATCC 1020 / DSM 3700 / CBS 544.65 / FGSC A1164 / JCM 1740 / NRRL 181 / WB 181) (Aspergillus fischerianus), this protein is Maintenance of mitochondrial morphology protein 1.